The chain runs to 168 residues: Protein-export protein SecB (168 aa).

The segment at 1 to 20 is disordered; that stretch reads MTDETAANGENEAGRQSQSS.

The protein belongs to the SecB family. In terms of assembly, homotetramer, a dimer of dimers. One homotetramer interacts with 1 SecA dimer.

The protein resides in the cytoplasm. One of the proteins required for the normal export of preproteins out of the cell cytoplasm. It is a molecular chaperone that binds to a subset of precursor proteins, maintaining them in a translocation-competent state. It also specifically binds to its receptor SecA. The chain is Protein-export protein SecB from Rhodospirillum centenum (strain ATCC 51521 / SW).